The following is a 273-amino-acid chain: ATP synthase subunit a (273 aa).

Helical transmembrane passes span Trp-44–Tyr-64, Ile-104–Ile-124, Asp-149–Ile-169, Leu-223–Trp-243, and Ala-244–Val-264.

Belongs to the ATPase A chain family. As to quaternary structure, F-type ATPases have 2 components, CF(1) - the catalytic core - and CF(0) - the membrane proton channel. CF(1) has five subunits: alpha(3), beta(3), gamma(1), delta(1), epsilon(1). CF(0) has three main subunits: a(1), b(2) and c(9-12). The alpha and beta chains form an alternating ring which encloses part of the gamma chain. CF(1) is attached to CF(0) by a central stalk formed by the gamma and epsilon chains, while a peripheral stalk is formed by the delta and b chains.

Its subcellular location is the cell inner membrane. Functionally, key component of the proton channel; it plays a direct role in the translocation of protons across the membrane. The protein is ATP synthase subunit a of Shewanella putrefaciens (strain CN-32 / ATCC BAA-453).